A 177-amino-acid polypeptide reads, in one-letter code: Large ribosomal subunit protein uL6 (177 aa).

It belongs to the universal ribosomal protein uL6 family. As to quaternary structure, part of the 50S ribosomal subunit.

Its function is as follows. This protein binds to the 23S rRNA, and is important in its secondary structure. It is located near the subunit interface in the base of the L7/L12 stalk, and near the tRNA binding site of the peptidyltransferase center. The sequence is that of Large ribosomal subunit protein uL6 from Haemophilus influenzae (strain 86-028NP).